Consider the following 402-residue polypeptide: Endo-polygalacturonase (402 aa).

Positions 1-23 (MEYQSGKRVLSLSLGLIGLFSAS) are cleaved as a signal peptide. Disulfide bonds link Cys-41–Cys-62 and Cys-115–Cys-125. The Proton donor role is filled by Asp-249. The active site involves His-277.

Belongs to the glycosyl hydrolase 28 family. Monomer.

It localises to the secreted. It carries out the reaction (1,4-alpha-D-galacturonosyl)n+m + H2O = (1,4-alpha-D-galacturonosyl)n + (1,4-alpha-D-galacturonosyl)m.. Involved in maceration and soft-rotting of plant tissue. The chain is Endo-polygalacturonase (pehA) from Pectobacterium parmentieri.